We begin with the raw amino-acid sequence, 176 residues long: Large ribosomal subunit protein uL10 (176 aa).

It belongs to the universal ribosomal protein uL10 family. In terms of assembly, part of the ribosomal stalk of the 50S ribosomal subunit. The N-terminus interacts with L11 and the large rRNA to form the base of the stalk. The C-terminus forms an elongated spine to which L12 dimers bind in a sequential fashion forming a multimeric L10(L12)X complex.

In terms of biological role, forms part of the ribosomal stalk, playing a central role in the interaction of the ribosome with GTP-bound translation factors. In Hahella chejuensis (strain KCTC 2396), this protein is Large ribosomal subunit protein uL10.